The sequence spans 87 residues: Small ribosomal subunit protein bS18 (87 aa).

This sequence belongs to the bacterial ribosomal protein bS18 family. In terms of assembly, part of the 30S ribosomal subunit. Forms a tight heterodimer with protein bS6.

Binds as a heterodimer with protein bS6 to the central domain of the 16S rRNA, where it helps stabilize the platform of the 30S subunit. This is Small ribosomal subunit protein bS18 from Sulfurovum sp. (strain NBC37-1).